A 272-amino-acid polypeptide reads, in one-letter code: ATP phosphoribosyltransferase regulatory subunit (272 aa).

Belongs to the class-II aminoacyl-tRNA synthetase family. HisZ subfamily. In terms of assembly, heteromultimer composed of HisG and HisZ subunits.

Its subcellular location is the cytoplasm. The protein operates within amino-acid biosynthesis; L-histidine biosynthesis; L-histidine from 5-phospho-alpha-D-ribose 1-diphosphate: step 1/9. Required for the first step of histidine biosynthesis. May allow the feedback regulation of ATP phosphoribosyltransferase activity by histidine. This chain is ATP phosphoribosyltransferase regulatory subunit, found in Staphylococcus aureus (strain MRSA252).